We begin with the raw amino-acid sequence, 228 residues long: L-ribulose-5-phosphate 4-epimerase UlaF (228 aa).

Substrate is bound by residues 26-27 (GN), 43-44 (SG), and 72-73 (SS). Zn(2+) is bound by residues D74, H93, and H95. Catalysis depends on D118, which acts as the Proton donor/acceptor. H167 serves as a coordination point for Zn(2+). The active-site Proton donor/acceptor is the Y225.

Belongs to the aldolase class II family. AraD/FucA subfamily. Zn(2+) serves as cofactor.

The enzyme catalyses L-ribulose 5-phosphate = D-xylulose 5-phosphate. It participates in cofactor degradation; L-ascorbate degradation; D-xylulose 5-phosphate from L-ascorbate: step 4/4. Catalyzes the isomerization of L-ribulose 5-phosphate to D-xylulose 5-phosphate. Is involved in the anaerobic L-ascorbate utilization. The polypeptide is L-ribulose-5-phosphate 4-epimerase UlaF (Escherichia coli O8 (strain IAI1)).